A 324-amino-acid polypeptide reads, in one-letter code: Beta-ketoacyl-[acyl-carrier-protein] synthase III (324 aa).

Residues cysteine 116 and histidine 251 contribute to the active site. The segment at 252–256 is ACP-binding; it reads QANLR. The active site involves asparagine 281.

This sequence belongs to the thiolase-like superfamily. FabH family. Homodimer.

The protein localises to the cytoplasm. The enzyme catalyses malonyl-[ACP] + acetyl-CoA + H(+) = 3-oxobutanoyl-[ACP] + CO2 + CoA. It functions in the pathway lipid metabolism; fatty acid biosynthesis. In terms of biological role, catalyzes the condensation reaction of fatty acid synthesis by the addition to an acyl acceptor of two carbons from malonyl-ACP. Catalyzes the first condensation reaction which initiates fatty acid synthesis and may therefore play a role in governing the total rate of fatty acid production. Possesses both acetoacetyl-ACP synthase and acetyl transacylase activities. Its substrate specificity determines the biosynthesis of branched-chain and/or straight-chain of fatty acids. The sequence is that of Beta-ketoacyl-[acyl-carrier-protein] synthase III from Xylella fastidiosa (strain Temecula1 / ATCC 700964).